We begin with the raw amino-acid sequence, 205 residues long: Guanylate kinase (205 aa).

Residues 5 to 183 (GLLIVFSGPS…AAERVKKIIE (179 aa)) enclose the Guanylate kinase-like domain. 12 to 19 (GPSGVGKG) contacts ATP.

Belongs to the guanylate kinase family.

The protein localises to the cytoplasm. The catalysed reaction is GMP + ATP = GDP + ADP. Essential for recycling GMP and indirectly, cGMP. This Lactococcus lactis subsp. lactis (strain IL1403) (Streptococcus lactis) protein is Guanylate kinase (gmk).